The primary structure comprises 429 residues: Adenylosuccinate synthetase (429 aa).

GTP contacts are provided by residues 12 to 18 (GDEGKGK) and 40 to 42 (GHT). Residue Asp-13 is the Proton acceptor of the active site. The Mg(2+) site is built by Asp-13 and Gly-40. Residues 13–16 (DEGK), 38–41 (NAGH), Thr-129, Arg-143, Gln-223, Thr-238, and Arg-302 contribute to the IMP site. Catalysis depends on His-41, which acts as the Proton donor. 298–304 (TVTGRPR) contacts substrate. GTP-binding positions include Arg-304, 330 to 332 (KLD), and 412 to 414 (STS).

This sequence belongs to the adenylosuccinate synthetase family. Homodimer. Mg(2+) serves as cofactor.

Its subcellular location is the cytoplasm. The catalysed reaction is IMP + L-aspartate + GTP = N(6)-(1,2-dicarboxyethyl)-AMP + GDP + phosphate + 2 H(+). The protein operates within purine metabolism; AMP biosynthesis via de novo pathway; AMP from IMP: step 1/2. Functionally, plays an important role in the de novo pathway of purine nucleotide biosynthesis. Catalyzes the first committed step in the biosynthesis of AMP from IMP. This Paramagnetospirillum magneticum (strain ATCC 700264 / AMB-1) (Magnetospirillum magneticum) protein is Adenylosuccinate synthetase.